A 477-amino-acid polypeptide reads, in one-letter code: Adenylyl cyclase-associated protein 2 (477 aa).

Residue Ala-2 is modified to N-acetylalanine. Disordered regions lie at residues Ser-224–Ser-262 and Ile-274–Val-324. The span at Gly-231–Phe-248 shows a compositional bias: pro residues. The segment covering Arg-300–Pro-318 has biased composition (low complexity). 2 positions are modified to phosphoserine: Ser-301 and Ser-309. The C-CAP/cofactor C-like domain maps to Pro-318–Ile-455.

This sequence belongs to the CAP family. As to expression, found at relatively high levels in testes, at moderate levels in brain, heart and skeletal muscle, at lower levels in lung, skin, kidney and small intestine, and is undetectable in liver or spleen.

It is found in the cell membrane. Its function is as follows. Involved in the regulation of actin polymerization. The chain is Adenylyl cyclase-associated protein 2 (Cap2) from Rattus norvegicus (Rat).